Consider the following 931-residue polypeptide: Envelope glycoprotein B (931 aa).

The first 71 residues, 1 to 71, serve as a signal peptide directing secretion; that stretch reads MSPCGYYSKW…FSMFVTAVVS (71 aa). Over 72-786 the chain is Virion surface; it reads VSPSSFYESL…HGFTTFLSNP (715 aa). Intrachain disulfides connect Cys-122–Cys-584, Cys-139–Cys-540, Cys-213–Cys-277, Cys-369–Cys-417, and Cys-608–Cys-645. Asn-147 is a glycosylation site (N-linked (GlcNAc...) asparagine; by host). An involved in fusion and/or binding to host membrane region spans residues 179–185; sequence AWAGSSY. N-linked (GlcNAc...) asparagine; by host glycosylation is present at Asn-257. Residues 264–271 form an involved in fusion and/or binding to host membrane region; that stretch reads GTPGTYRT. N-linked (GlcNAc...) asparagine; by host glycans are attached at residues Asn-435, Asn-503, Asn-620, and Asn-686. 2 hydrophobic membrane proximal region regions span residues 731-784 and 764-784; these read IDKV…TFLS and VVLG…TFLS. A helical transmembrane segment spans residues 787-807; sequence FGALAVGLLVLAGLVAAFFAY. At 808-931 the chain is on the intravirion side; sequence RYVLKLKTSP…RVRTENVTGV (124 aa). The Golgi targeting motif lies at 881–884; it reads YMTL. Residues 920-923 carry the Internalization motif motif; the sequence is YSRV.

This sequence belongs to the herpesviridae glycoprotein B family. In terms of assembly, homotrimer; disulfide-linked. Binds to heparan sulfate proteoglycans. Interacts with gH/gL heterodimer. In terms of processing, a proteolytic cleavage by host furin generates two subunits that remain linked by disulfide bonds.

The protein resides in the virion membrane. The protein localises to the host cell membrane. It localises to the host endosome membrane. It is found in the host Golgi apparatus membrane. Its function is as follows. Envelope glycoprotein that forms spikes at the surface of virion envelope. Essential for the initial attachment to heparan sulfate moieties of the host cell surface proteoglycans. Involved in fusion of viral and cellular membranes leading to virus entry into the host cell. Following initial binding to its host receptors, membrane fusion is mediated by the fusion machinery composed at least of gB and the heterodimer gH/gL. May be involved in the fusion between the virion envelope and the outer nuclear membrane during virion egress. This is Envelope glycoprotein B from Varicella-zoster virus (strain Oka vaccine) (HHV-3).